We begin with the raw amino-acid sequence, 151 residues long: Ribonuclease H (151 aa).

Residues 1–146 (MPDLYAYTDG…ADELARAGMA (146 aa)) form the RNase H type-1 domain. Mg(2+) contacts are provided by Asp9, Glu52, Asp74, and Asp138.

Belongs to the RNase H family. In terms of assembly, monomer. Requires Mg(2+) as cofactor.

Its subcellular location is the cytoplasm. The catalysed reaction is Endonucleolytic cleavage to 5'-phosphomonoester.. Its function is as follows. Endonuclease that specifically degrades the RNA of RNA-DNA hybrids. The protein is Ribonuclease H of Cereibacter sphaeroides (strain ATCC 17029 / ATH 2.4.9) (Rhodobacter sphaeroides).